The primary structure comprises 250 residues: UDP-2,3-diacylglucosamine hydrolase (250 aa).

Aspartate 8, histidine 10, aspartate 41, asparagine 79, and histidine 114 together coordinate Mn(2+). 79–80 (NR) contributes to the substrate binding site. Aspartate 122, serine 160, glutamine 167, and histidine 195 together coordinate substrate. Mn(2+)-binding residues include histidine 195 and histidine 197.

The protein belongs to the LpxH family. The cofactor is Mn(2+).

It localises to the cell inner membrane. The catalysed reaction is UDP-2-N,3-O-bis[(3R)-3-hydroxytetradecanoyl]-alpha-D-glucosamine + H2O = 2-N,3-O-bis[(3R)-3-hydroxytetradecanoyl]-alpha-D-glucosaminyl 1-phosphate + UMP + 2 H(+). It participates in glycolipid biosynthesis; lipid IV(A) biosynthesis; lipid IV(A) from (3R)-3-hydroxytetradecanoyl-[acyl-carrier-protein] and UDP-N-acetyl-alpha-D-glucosamine: step 4/6. In terms of biological role, hydrolyzes the pyrophosphate bond of UDP-2,3-diacylglucosamine to yield 2,3-diacylglucosamine 1-phosphate (lipid X) and UMP by catalyzing the attack of water at the alpha-P atom. Involved in the biosynthesis of lipid A, a phosphorylated glycolipid that anchors the lipopolysaccharide to the outer membrane of the cell. The protein is UDP-2,3-diacylglucosamine hydrolase of Nitrosococcus oceani (strain ATCC 19707 / BCRC 17464 / JCM 30415 / NCIMB 11848 / C-107).